We begin with the raw amino-acid sequence, 132 residues long: MSLNIRVIAPDGLIWDTTAEGVVLPSLTGQLGILTGHAPLITSLEIGILRIKTNSKWTPIIVLGGFAVIKDDEVLVLISGVEEVIKEDYSKAKSILAKAKIDLDSAKTTKEIIDASQELKIASAKVKAFKFI.

The protein belongs to the ATPase epsilon chain family. As to quaternary structure, F-type ATPases have 2 components, CF(1) - the catalytic core - and CF(0) - the membrane proton channel. CF(1) has five subunits: alpha(3), beta(3), gamma(1), delta(1), epsilon(1). CF(0) has three main subunits: a, b and c.

It is found in the plastid. It localises to the chloroplast thylakoid membrane. Functionally, produces ATP from ADP in the presence of a proton gradient across the membrane. This chain is ATP synthase epsilon chain, chloroplastic, found in Pylaiella littoralis (Seaweed).